The following is a 91-amino-acid chain: Probable Fe(2+)-trafficking protein (91 aa).

It belongs to the Fe(2+)-trafficking protein family. Monomer.

In terms of biological role, could be a mediator in iron transactions between iron acquisition and iron-requiring processes, such as synthesis and/or repair of Fe-S clusters in biosynthetic enzymes. The sequence is that of Probable Fe(2+)-trafficking protein from Escherichia coli O7:K1 (strain IAI39 / ExPEC).